Here is a 250-residue protein sequence, read N- to C-terminus: Homeobox protein DLL-1 (250 aa).

Disordered stretches follow at residues 40-66 (YPSL…SGSN) and 84-106 (SPYL…PDQQ). Over residues 84-98 (SPYLQSCNSNTTTQS) the composition is skewed to polar residues. The homeobox DNA-binding region spans 125-184 (IRKPRTIYSSLQLQALNHRFQQTQYLALPERAELAASLGVTQTQVKIWFQNKRSKYKKLI).

Belongs to the distal-less homeobox family.

The protein localises to the nucleus. The polypeptide is Homeobox protein DLL-1 (dll1) (Xenopus laevis (African clawed frog)).